Here is a 270-residue protein sequence, read N- to C-terminus: Phosphoribosylformylglycinamidine synthase subunit PurQ (270 aa).

Residues 5-251 (ALVLHATGTN…VIRERDSEEE (247 aa)) enclose the Glutamine amidotransferase type-1 domain. Residue Cys-95 is the Nucleophile of the active site. Residues His-236 and Glu-238 contribute to the active site.

Part of the FGAM synthase complex composed of 1 PurL, 1 PurQ and 2 PurS subunits.

It is found in the cytoplasm. It carries out the reaction N(2)-formyl-N(1)-(5-phospho-beta-D-ribosyl)glycinamide + L-glutamine + ATP + H2O = 2-formamido-N(1)-(5-O-phospho-beta-D-ribosyl)acetamidine + L-glutamate + ADP + phosphate + H(+). The enzyme catalyses L-glutamine + H2O = L-glutamate + NH4(+). The protein operates within purine metabolism; IMP biosynthesis via de novo pathway; 5-amino-1-(5-phospho-D-ribosyl)imidazole from N(2)-formyl-N(1)-(5-phospho-D-ribosyl)glycinamide: step 1/2. Part of the phosphoribosylformylglycinamidine synthase complex involved in the purines biosynthetic pathway. Catalyzes the ATP-dependent conversion of formylglycinamide ribonucleotide (FGAR) and glutamine to yield formylglycinamidine ribonucleotide (FGAM) and glutamate. The FGAM synthase complex is composed of three subunits. PurQ produces an ammonia molecule by converting glutamine to glutamate. PurL transfers the ammonia molecule to FGAR to form FGAM in an ATP-dependent manner. PurS interacts with PurQ and PurL and is thought to assist in the transfer of the ammonia molecule from PurQ to PurL. This Treponema denticola (strain ATCC 35405 / DSM 14222 / CIP 103919 / JCM 8153 / KCTC 15104) protein is Phosphoribosylformylglycinamidine synthase subunit PurQ.